A 330-amino-acid polypeptide reads, in one-letter code: DNA-directed RNA polymerase subunit alpha (330 aa).

An alpha N-terminal domain (alpha-NTD) region spans residues 1 to 236; that stretch reads MQNSVIEFLK…EQLEAFIDLR (236 aa). An alpha C-terminal domain (alpha-CTD) region spans residues 250–330; that stretch reads FDPILLRLVD…NWPPTNILDN (81 aa).

The protein belongs to the RNA polymerase alpha chain family. In terms of assembly, homodimer. The RNAP catalytic core consists of 2 alpha, 1 beta, 1 beta' and 1 omega subunit. When a sigma factor is associated with the core the holoenzyme is formed, which can initiate transcription.

It carries out the reaction RNA(n) + a ribonucleoside 5'-triphosphate = RNA(n+1) + diphosphate. Functionally, DNA-dependent RNA polymerase catalyzes the transcription of DNA into RNA using the four ribonucleoside triphosphates as substrates. The sequence is that of DNA-directed RNA polymerase subunit alpha from Blochmanniella pennsylvanica (strain BPEN).